A 219-amino-acid polypeptide reads, in one-letter code: Ribose-5-phosphate isomerase A (219 aa).

Substrate contacts are provided by residues 28 to 31 (SGST), 81 to 84 (DGAD), and 94 to 97 (KGGG). Residue E103 is the Proton acceptor of the active site. K121 serves as a coordination point for substrate.

The protein belongs to the ribose 5-phosphate isomerase family. In terms of assembly, homodimer.

It catalyses the reaction aldehydo-D-ribose 5-phosphate = D-ribulose 5-phosphate. It functions in the pathway carbohydrate degradation; pentose phosphate pathway; D-ribose 5-phosphate from D-ribulose 5-phosphate (non-oxidative stage): step 1/1. Catalyzes the reversible conversion of ribose-5-phosphate to ribulose 5-phosphate. This Actinobacillus pleuropneumoniae serotype 5b (strain L20) protein is Ribose-5-phosphate isomerase A.